The following is a 296-amino-acid chain: D-alanine--D-alanine ligase (296 aa).

Residues 103–293 enclose the ATP-grasp domain; sequence KEILMHHRMP…FDSFVKRIIE (191 aa). An ATP-binding site is contributed by 129-180; it reads ISFPVAVKPSSGGSSIATFKVKSIQELKHAYEEASKYGEVMIEQWVTGKEIT. 3 residues coordinate Mg(2+): Asp-247, Glu-260, and Asn-262.

The protein belongs to the D-alanine--D-alanine ligase family. Mg(2+) is required as a cofactor. Requires Mn(2+) as cofactor.

The protein resides in the cytoplasm. It carries out the reaction 2 D-alanine + ATP = D-alanyl-D-alanine + ADP + phosphate + H(+). It functions in the pathway cell wall biogenesis; peptidoglycan biosynthesis. Functionally, cell wall formation. The polypeptide is D-alanine--D-alanine ligase (Francisella tularensis subsp. tularensis (strain FSC 198)).